A 483-amino-acid polypeptide reads, in one-letter code: MSSSTKCKKAYEAVVKMVTHRFNSKAVRNYHQPQGLNRSLATRNAARVRGMVPSRRGGVGLYKSSSSKLMNKLGRQKTWINEFEHFNSLHEIAYTPNIALSSEIQKYLKALETNYRSIYEKSSELLDKKLEEIDKKWIEKNGCIPDASKDDVEKNLRKQYLADVQDVKNEHIPVMNCEPGGSQFKYLCKTIELLSSNKTICFAIDVEAFEFDTDIVTEIGIAIYDPRENIYSLMPIIRSYHLIVAEALPLRNKKFVCDFKDCFLLGESLVLPLEQCVEFIQSLINFYMKCETDQDTTWERAFVGHAIAGDIKWLKKIGVHVPELDNELTKPEDSTESKGVRKHVKMLDTEKIYSMCYGKKGSSLGKLLRLFHLPHAFLHNAGNDAYYTLLLMLKLGDYNFRKQIGADDLETMGYRIREWFKREADEPKILPMSYVLSVMNANNSKPKVDDKGRKKPRDLVPQTEFSGSHWFQNARAAFKSTLV.

The protein localises to the nucleus. It localises to the mitochondrion. This is an uncharacterized protein from Saccharomyces cerevisiae (strain ATCC 204508 / S288c) (Baker's yeast).